Here is a 370-residue protein sequence, read N- to C-terminus: Phospho-N-acetylmuramoyl-pentapeptide-transferase (370 aa).

A run of 11 helical transmembrane segments spans residues 21–41 (PTSI…DLFI), 46–66 (LLVP…WGII), 92–112 (PSMG…LFAL), 117–137 (FSKQ…IGLI), 151–171 (LSVK…LVLI), 181–201 (ILIF…IALF), 217–237 (DGLA…ELII), 243–263 (NYAI…FLIF), 270–290 (VFMG…VALL), 298–318 (LIMG…VGVF), and 349–369 (TIIV…AIML).

The protein belongs to the glycosyltransferase 4 family. MraY subfamily. It depends on Mg(2+) as a cofactor.

The protein localises to the cell inner membrane. The catalysed reaction is UDP-N-acetyl-alpha-D-muramoyl-L-alanyl-gamma-D-glutamyl-meso-2,6-diaminopimeloyl-D-alanyl-D-alanine + di-trans,octa-cis-undecaprenyl phosphate = di-trans,octa-cis-undecaprenyl diphospho-N-acetyl-alpha-D-muramoyl-L-alanyl-D-glutamyl-meso-2,6-diaminopimeloyl-D-alanyl-D-alanine + UMP. It functions in the pathway cell wall biogenesis; peptidoglycan biosynthesis. Catalyzes the initial step of the lipid cycle reactions in the biosynthesis of the cell wall peptidoglycan: transfers peptidoglycan precursor phospho-MurNAc-pentapeptide from UDP-MurNAc-pentapeptide onto the lipid carrier undecaprenyl phosphate, yielding undecaprenyl-pyrophosphoryl-MurNAc-pentapeptide, known as lipid I. The sequence is that of Phospho-N-acetylmuramoyl-pentapeptide-transferase from Prochlorococcus marinus (strain SARG / CCMP1375 / SS120).